The following is a 421-amino-acid chain: Serine--tRNA ligase (421 aa).

231–233 lines the L-serine pocket; it reads TAE. 262 to 264 contributes to the ATP binding site; sequence RRE. Position 285 (Glu-285) interacts with L-serine. Position 349–352 (349–352) interacts with ATP; the sequence is EISS. Ser-384 contributes to the L-serine binding site.

The protein belongs to the class-II aminoacyl-tRNA synthetase family. Type-1 seryl-tRNA synthetase subfamily. In terms of assembly, homodimer. The tRNA molecule binds across the dimer.

It localises to the cytoplasm. It carries out the reaction tRNA(Ser) + L-serine + ATP = L-seryl-tRNA(Ser) + AMP + diphosphate + H(+). The enzyme catalyses tRNA(Sec) + L-serine + ATP = L-seryl-tRNA(Sec) + AMP + diphosphate + H(+). The protein operates within aminoacyl-tRNA biosynthesis; selenocysteinyl-tRNA(Sec) biosynthesis; L-seryl-tRNA(Sec) from L-serine and tRNA(Sec): step 1/1. Catalyzes the attachment of serine to tRNA(Ser). Is also able to aminoacylate tRNA(Sec) with serine, to form the misacylated tRNA L-seryl-tRNA(Sec), which will be further converted into selenocysteinyl-tRNA(Sec). This is Serine--tRNA ligase from Hydrogenobaculum sp. (strain Y04AAS1).